The chain runs to 392 residues: Integrin-linked kinase-associated serine/threonine phosphatase 2C (392 aa).

The residue at position 1 (Met-1) is an N-acetylmethionine. A disordered region spans residues 1–91 (MDLFGDLPEP…PEEEKNGGEE (91 aa)). Positions 31-40 (DLPPTSSTDS) are enriched in low complexity. A compositionally biased stretch (polar residues) spans 59–70 (SGSLATSGSQVV). Residues 72–91 (NEGKGAKRKAPEEEKNGGEE) are compositionally biased toward basic and acidic residues. The PPM-type phosphatase domain occupies 108–390 (KGYVAERKGE…DNVTVMVVRI (283 aa)). 2 residues coordinate Mn(2+): Asp-152 and Gly-153. N6-acetyllysine is present on Lys-210. The Mn(2+) site is built by Asp-326 and Asp-381.

The protein belongs to the PP2C family. Interacts with ILK. Mg(2+) is required as a cofactor. The cofactor is Mn(2+). As to expression, widely expressed. Highest expression observed in kidney, liver and muscle.

Its subcellular location is the cytoplasm. The enzyme catalyses O-phospho-L-seryl-[protein] + H2O = L-seryl-[protein] + phosphate. It catalyses the reaction O-phospho-L-threonyl-[protein] + H2O = L-threonyl-[protein] + phosphate. In terms of biological role, protein phosphatase that may play a role in regulation of cell cycle progression via dephosphorylation of its substrates whose appropriate phosphorylation states might be crucial for cell proliferation. Selectively associates with integrin linked kinase (ILK), to modulate cell adhesion and growth factor signaling. Inhibits the ILK-GSK3B signaling axis and may play an important role in inhibiting oncogenic transformation. This chain is Integrin-linked kinase-associated serine/threonine phosphatase 2C (Ilkap), found in Rattus norvegicus (Rat).